A 337-amino-acid chain; its full sequence is Trace amine-associated receptor 5 (337 aa).

The Extracellular portion of the chain corresponds to 1-38 (MRAVLLPGSGEQPTAFCYQVNGSCPRTVHPLAIQVVIY). Asparagine 21 carries N-linked (GlcNAc...) asparagine glycosylation. Intrachain disulfides connect cysteine 24/cysteine 188 and cysteine 99/cysteine 192. Residues 39–59 (LACAVGVLITVLGNLFVVFAV) form a helical membrane-spanning segment. At 60-70 (SYFKVLHTPTN) the chain is on the cytoplasmic side. A helical membrane pass occupies residues 71–91 (FLLLSLALADMLLGLLVLPLS). Residues 92–109 (TVRSVESCWFFGDFLCRL) lie on the Extracellular side of the membrane. Residues 110 to 130 (HTYLDTLFCLTSIFHLCFISI) traverse the membrane as a helical segment. At 131 to 154 (DRHCAICDPLLYPSKFTVRTALRY) the chain is on the cytoplasmic side. A helical membrane pass occupies residues 155–175 (IVAGWGIPAAYTAFFLYTDVV). Positions 176–189 (ERALSQWLEEMPCV) are extracellular Loop 2 (ECL2). Topologically, residues 176–204 (ERALSQWLEEMPCVGSCQLLFNKFWGWLN) are extracellular. A helical transmembrane segment spans residues 205-225 (FPAFFVPCLIMISLYLKIFVV). Topologically, residues 226-253 (ATRQAQQIRTLSQSLAGAVKRERKAAKT) are cytoplasmic. Residues 254 to 274 (LGIAVGIYLVCWLPFTVDTLV) form a helical membrane-spanning segment. Topologically, residues 275–284 (DSLLNFITPP) are extracellular. A helical transmembrane segment spans residues 285–307 (LVFDIFIWFAYFNSACNPIIYVF). The Cytoplasmic segment spans residues 308 to 337 (SYRWFRKALKLLLSREIFSPRTPTVDLYHD).

It belongs to the G-protein coupled receptor 1 family. In terms of tissue distribution, specifically expressed in neurons of the olfactory epithelium, to discrete glomeruli predominantly localized to a confined bulb region. Present in the dorsal area of the main olfactory epithelium. Also present in the limbic brain areas receiving projection from the olfactory system and involved in the regulation of emotions. Also expressed in some brain regions outside the olfactory epithelium, such as the hippocampus, cerebellum, cortex, raphe nuclei, hypothalamus, and habenula.

It localises to the cell membrane. Its activity is regulated as follows. Inhibited by 1-[(5,5- diphenyloxolan-2-yl)methyl]-4-(2-methoxyphenyl)piperazine and N-[(2,2-diphenyl-1,3-dioxolan-4-yl)methyl]-2-(2- methoxyphenoxy)ethan-1-amine small molecules. Functionally, olfactory receptor specific for trimethylamine, a trace amine enriched in the urine of male mice, playing a role in social behavior. Also activated by N-methylpiperidine. Trimethylamine is present at high concentration in the urine of male mice after puberty and acts as an attractant. Trimethylamine-binding causes a conformation change that triggers signaling via G(s)-class of G alpha proteins (GNAL or GNAS). Also required to provide olfactory input into limbic brain areas to regulate emotional behaviors likely via modulation of the serotonin system. The sequence is that of Trace amine-associated receptor 5 from Mus musculus (Mouse).